Reading from the N-terminus, the 566-residue chain is Heat shock protein 70 homolog C57A7.12 (566 aa).

39–46 provides a ligand contact to ATP; sequence AFNRDGKT. 2 positions are modified to phosphoserine: serine 86 and serine 500.

The protein belongs to the heat shock protein 70 family.

The sequence is that of Heat shock protein 70 homolog C57A7.12 from Schizosaccharomyces pombe (strain 972 / ATCC 24843) (Fission yeast).